The chain runs to 736 residues: Prospero homeobox protein 1 (736 aa).

Residues 103–135 (KNGGTEPSFQASGLSSTGSEVHQEDVCSNSSRD) show a composition bias toward polar residues. The tract at residues 103 to 146 (KNGGTEPSFQASGLSSTGSEVHQEDVCSNSSRDSPQECLSPFGR) is disordered. The Nuclear localization signal signature appears at 163 to 168 (RAKRAR). 5 disordered regions span residues 180–220 (PRVA…QQQS), 261–301 (YDST…EMCE), 319–344 (EIGE…HPEG), 445–465 (NSSD…SLHQ), and 499–518 (PSAS…DLTR). The span at 264 to 274 (TDSENDEDGNL) shows a compositional bias: acidic residues. Residues 319–335 (EIGENKPKREGPKEKDQ) show a composition bias toward basic and acidic residues. Positions 450-460 (PASAPPAGGHH) are enriched in low complexity. Residues 505–518 (GKERASPESLDLTR) show a composition bias toward basic and acidic residues. One can recognise a Prospero-type homeo domain in the interval 576-634 (QEGLSPNHLKKAKLMFFYTRYPSSNMLKTYFSDVKFNRCITSQLIKWFSNFREFYYIQM). A homeo-Prospero region spans residues 576–734 (QEGLSPNHLK…KSPNCLQELL (159 aa)). Residues 635 to 734 (EKYARQAIND…KSPNCLQELL (100 aa)) form the Prospero domain.

This sequence belongs to the Prospero homeodomain family. As to expression, expressed most actively in the developing lens and midgut and at lower levels in the developing brain, heart, muscle and retina.

The protein resides in the nucleus. Functionally, transcription factor which may be involved in developmental processes such as cell fate determination, gene transcriptional regulation and progenitor cell regulation in a number of organs. May be essential in the development and function of the eye. May play a role in the regulation of the circadian rhythm by repressing the expression of clock genes. This Gallus gallus (Chicken) protein is Prospero homeobox protein 1 (PROX1).